We begin with the raw amino-acid sequence, 327 residues long: Flap endonuclease 1 (327 aa).

The tract at residues 1–98 (MGVKLKDIIQ…ETIDQRRQTR (98 aa)) is N-domain. 7 residues coordinate Mg(2+): D27, D80, E152, E154, D173, D175, and D226. An I-domain region spans residues 116 to 246 (EARKYAMRSS…KTALKLAKKG (131 aa)). The interval 319–327 (SQKSLEDWF) is interaction with PCNA.

Belongs to the XPG/RAD2 endonuclease family. FEN1 subfamily. As to quaternary structure, interacts with PCNA. PCNA stimulates the nuclease activity without altering cleavage specificity. Mg(2+) is required as a cofactor.

Its function is as follows. Structure-specific nuclease with 5'-flap endonuclease and 5'-3' exonuclease activities involved in DNA replication and repair. During DNA replication, cleaves the 5'-overhanging flap structure that is generated by displacement synthesis when DNA polymerase encounters the 5'-end of a downstream Okazaki fragment. Binds the unpaired 3'-DNA end and kinks the DNA to facilitate 5' cleavage specificity. Cleaves one nucleotide into the double-stranded DNA from the junction in flap DNA, leaving a nick for ligation. Also involved in the base excision repair (BER) pathway. Acts as a genome stabilization factor that prevents flaps from equilibrating into structures that lead to duplications and deletions. Also possesses 5'-3' exonuclease activity on nicked or gapped double-stranded DNA. The chain is Flap endonuclease 1 from Methanobrevibacter smithii (strain ATCC 35061 / DSM 861 / OCM 144 / PS).